The primary structure comprises 376 residues: NIF3-like protein 1 (376 aa).

Position 108 is an N6-acetyllysine (Lys108). The segment at 243-376 is mediates interaction with COPS2; that stretch reads LLLHTGMGRL…ETDRDPLRVV (134 aa). Position 254 is a phosphothreonine (Thr254). Phosphoserine is present on Ser258.

It belongs to the GTP cyclohydrolase I type 2/NIF3 family. Homodimer. Interacts with COPS2. Interacts with THOC7. As to expression, ubiquitous. Detected in all tissues tested with higher expression in cerebellum, heart and kidney and to a lower level in cerebrum, lung, liver, spleen and muscle.

The protein resides in the cytoplasm. Its subcellular location is the nucleus. Functionally, may function as a transcriptional corepressor through its interaction with COPS2, negatively regulating the expression of genes involved in neuronal differentiation. The chain is NIF3-like protein 1 from Mus musculus (Mouse).